We begin with the raw amino-acid sequence, 835 residues long: Neuroligin-2 (835 aa).

A signal peptide spans 1-14 (MWLLALCLVGLAGA). The Extracellular portion of the chain corresponds to 15 to 677 (QRGGGGPGGG…DSRDYSTELS (663 aa)). Asn-98 and Asn-136 each carry an N-linked (GlcNAc...) asparagine glycan. Cystine bridges form between Cys-106/Cys-141, Cys-317/Cys-328, and Cys-487/Cys-521. N-linked (GlcNAc...) asparagine glycosylation occurs at Asn-522. The tract at residues 623–668 (PPYATRWPPRPPAGAPGTRRPPPPATLPPEPEPEPGPRAYDRFPGD) is disordered. Positions 630–658 (PPRPPAGAPGTRRPPPPATLPPEPEPEPG) are enriched in pro residues. The chain crosses the membrane as a helical span at residues 678-698 (VTVAVGASLLFLNILAFAALY). Positions 678–698 (VTVAVGASLLFLNILAFAALY) are required for interaction with LHFPL4. At 699 to 835 (YKRDRRQELR…LPHPHSTTRV (137 aa)) the chain is on the cytoplasmic side. A phosphoserine mark is found at Ser-713 and Ser-718. The tract at residues 790–835 (LLPSGLGPPPPPPPPSLHPFGPFPPPPPTATSHNNTLPHPHSTTRV) is disordered. The segment covering 795-818 (LGPPPPPPPPSLHPFGPFPPPPPT) has biased composition (pro residues). Residues 823–835 (NNTLPHPHSTTRV) show a composition bias toward polar residues.

The protein belongs to the type-B carboxylesterase/lipase family. As to quaternary structure, interacts with neurexins NRXN1, NRXN2 and NRXN3. Interaction with neurexins is mediated by heparan sulfate glycan modification on neurexin. Interacts (via its C-terminus) with DLG4/PSD-95 (via PDZ domain 3). Interacts with PATJ. Interacts with GPHN. Interacts with MDGA1 and MDGA2. Found in a complex with MAGI2 and IGSF9B, where it interacts with MAGI2 (via WW 1, WW 2 and PDZ 2 domains). Identified in a complex of 720 kDa composed of LHFPL4, NLGN2, GABRA1, GABRB2, GABRG2 and GABRB3. Interacts with LHFPL4; leading to mutual regulation of the protein level and synaptic clustering. Interacts with NLGN2. As to expression, expressed in the blood vessel walls. Detected in colon, brain and pancreas islets of Langerhans (at protein level). Detected in brain, and at lower levels in pancreas islet beta cells.

It localises to the cell membrane. The protein resides in the postsynaptic cell membrane. Its subcellular location is the presynaptic cell membrane. In terms of biological role, transmembrane scaffolding protein involved in cell-cell interactions via its interactions with neurexin family members. Mediates cell-cell interactions both in neurons and in other types of cells, such as Langerhans beta cells. Plays a role in synapse function and synaptic signal transmission, especially via gamma-aminobutyric acid receptors (GABA(A) receptors). Functions by recruiting and clustering synaptic proteins. Promotes clustering of postsynaptic GABRG2 and GPHN. Promotes clustering of postsynaptic LHFPL4. Modulates signaling by inhibitory synapses, and thereby plays a role in controlling the ratio of signaling by excitatory and inhibitory synapses and information processing. Required for normal signal amplitude from inhibitory synapses, but is not essential for normal signal frequency. May promote the initial formation of synapses, but is not essential for this. In vitro, triggers the de novo formation of presynaptic structures. Mediates cell-cell interactions between Langerhans beta cells and modulates insulin secretion. The polypeptide is Neuroligin-2 (NLGN2) (Homo sapiens (Human)).